A 319-amino-acid polypeptide reads, in one-letter code: Ribosomal RNA large subunit methyltransferase F (319 aa).

The segment at 1-25 (MAPFFSAMTSKKQSQGLPKGPHPDN) is disordered. Residues 7 to 16 (AMTSKKQSQG) are compositionally biased toward polar residues.

The protein belongs to the methyltransferase superfamily. METTL16/RlmF family.

It is found in the cytoplasm. The catalysed reaction is adenosine(1618) in 23S rRNA + S-adenosyl-L-methionine = N(6)-methyladenosine(1618) in 23S rRNA + S-adenosyl-L-homocysteine + H(+). In terms of biological role, specifically methylates the adenine in position 1618 of 23S rRNA. This Shewanella amazonensis (strain ATCC BAA-1098 / SB2B) protein is Ribosomal RNA large subunit methyltransferase F.